Here is a 1252-residue protein sequence, read N- to C-terminus: ABC transporter B family member 19 (1252 aa).

N-linked (GlcNAc...) asparagine glycosylation is present at Asn-5. Residues 41–330 form the ABC transmembrane type-1 1 domain; the sequence is MFVGSLGAIV…SFSNLGAFSK (290 aa). Helical transmembrane passes span 42 to 62 and 88 to 108; these read FVGS…FLLF and LYFV…IACW. Asp-136 contributes to the ATP binding site. 4 helical membrane-spanning segments follow: residues 163–183, 187–207, 274–294, and 308–328; these read VGNF…GFVS, LALL…LYAY, CTYG…GVFI, and IFSA…LGAF. Residues Tyr-276 and Trp-283 each coordinate brassinolide. An ABC transporter 1 domain is found at 365 to 601; it reads IEFKDVTFSY…SGAYASLIRF (237 aa). ATP contacts are provided by Tyr-374, Ser-376, Gly-405, Lys-406, Ser-407, Thr-408, and Glu-529. A glycan (N-linked (GlcNAc...) asparagine) is linked at Asn-641. The region spanning 687 to 975 is the ABC transmembrane type-1 2 domain; that stretch reads SIMGAVGSIL…TVSLAPEIIR (289 aa). 2 helical membrane passes run 688 to 708 and 732 to 752; these read IMGA…AIVM and FIYI…HYFF. An N-linked (GlcNAc...) asparagine glycan is attached at Asn-758. Asp-780 serves as a coordination point for ATP. Residues Asn-785 and Asn-814 are each glycosylated (N-linked (GlcNAc...) asparagine). A run of 3 helical transmembrane segments spans residues 822 to 842, 914 to 934, and 949 to 969; these read FIVA…TFPL, GFLF…ILWY, and VIKV…TVSL. The interaction with FKBP42/TWD1 stretch occupies residues 965 to 1252; that stretch reads ETVSLAPEII…RLLQLQTHRI (288 aa). The ABC transporter 2 domain occupies 1010 to 1246; it reads IEFRHVDFAY…PEGAYSRLLQ (237 aa). Residues Tyr-1019, Ser-1021, Arg-1022, Lys-1051, Ser-1052, and Ser-1053 each coordinate ATP.

The protein belongs to the ABC transporter superfamily. ABCB family. Multidrug resistance exporter (TC 3.A.1.201) subfamily. As to quaternary structure, interacts with 1-naphthylphthalamic acid (NPA), and FKBP42/TWD1. Phosphorylated by PHOT1 in phototropic seedlings, to modulates auxin export and distribution and regulates leaf and petiole curling. As to expression, ubiquitous, mostly in shoot meristems. Present in the majority of stem cells, predominantly in a non-polar manner. Accumulates in seedlings roots and hypocotyls, and in roots apices and inflorescences.

It is found in the cell membrane. The catalysed reaction is (indol-3-yl)acetate(in) + ATP + H2O = (indol-3-yl)acetate(out) + ADP + phosphate + H(+). The enzyme catalyses brassinolide(in) + ATP + H2O = brassinolide(out) + ADP + phosphate + H(+). It carries out the reaction 24-epi-brassinolide(in) + ATP + H2O = 24-epi-brassinolide(out) + ADP + phosphate + H(+). It catalyses the reaction 24-epi-castasterone(in) + ATP + H2O = 24-epi-castasterone(out) + ADP + phosphate + H(+). The catalysed reaction is castasterone(in) + ATP + H2O = castasterone(out) + ADP + phosphate + H(+). Transport capacity is stimulated by the chaperone protein FKBP42/TWD1. ATPase activity is specifically activated by bioactive brassinosteroids in a dose-dependent manner, including brassinolide (BL), 24-epiBL and 24-epicastasterone (24-epiCS). Inhibited by vanadate. Functionally, brassinosteroid exporter that, in conjunction with ABCB1, supports the accumulation of exogenous brassinosteroids (BR) in the apoplast, thus promoting BR signaling initiation involving the specific receptor BRI1 and required for plant growth and stress responses. Mediates the transport of castasterone (CSA) and brassinolide (BL) across the plasma membrane. Auxin efflux transporter that acts as a negative regulator of light signaling to promote hypocotyl elongation by mediating leaf tip to petiole auxin flux. Required for the regulation of leaf position and morphology during PHOT1-mediated blue light responses involving auxin distribution, especially in low light fluence. Together with ABCB1 and in a FKBP42/TWD1-dependent manner, supports seed development by promoting stamen elongation and, to a lesser extent, anther dehiscence and pollen maturation, probably as auxin transporters. Contributes to the connective auxin transport (CAT) that ensures communication across the shoot system, including auxin loading at axillary bud apices to influence strigolactone-mediated bud outgrowth responses and shoot branching control. Mediates the accumulation of chlorophyll and anthocyanin, as well as the expression of genes in response to light. Participates in auxin efflux and thus regulates the polar auxin basipetal transport (from auxin-producing leaves to auxin-sensitive tissues, and from root tips to root elongating zone). Involved in diverse auxin-mediated responses including gravitropism, phototropism and lateral root formation. Required for the regulation of organ bending, such as gravitropic root bending. This Arabidopsis thaliana (Mouse-ear cress) protein is ABC transporter B family member 19.